An 867-amino-acid polypeptide reads, in one-letter code: 2-methylcitrate dehydratase (2-methyl-trans-aconitate forming) (867 aa).

Residues cysteine 410, cysteine 476, and cysteine 479 each contribute to the [4Fe-4S] cluster site.

This sequence belongs to the aconitase/IPM isomerase family. [4Fe-4S] cluster is required as a cofactor.

The enzyme catalyses (2S,3S)-2-methylcitrate = 2-methyl-trans-aconitate + H2O. The catalysed reaction is citrate = D-threo-isocitrate. Its pathway is organic acid metabolism; propanoate degradation. Inhibited by ferricyanide and EDTA. Its function is as follows. Involved in the catabolism of short chain fatty acids (SCFA) via the 2-methylcitrate cycle II (propionate degradation route). In vivo under anaerobic conditions, AcnD catalyzes the stereospecific dehydration of (2S,3S)-methylcitrate (2-MC) to yield the trans isomer of 2-methyl-aconitate (2-MCA). AcnD can also accept citrate and cis-aconitate, but with a lower efficiency. 2-methylisocitrate and isocitrate are not substrates. This is 2-methylcitrate dehydratase (2-methyl-trans-aconitate forming) (acnD) from Shewanella oneidensis (strain ATCC 700550 / JCM 31522 / CIP 106686 / LMG 19005 / NCIMB 14063 / MR-1).